The following is a 94-amino-acid chain: DNA-directed RNA polymerase subunit omega (94 aa).

It belongs to the RNA polymerase subunit omega family. As to quaternary structure, the RNAP catalytic core consists of 2 alpha, 1 beta, 1 beta' and 1 omega subunit. When a sigma factor is associated with the core the holoenzyme is formed, which can initiate transcription.

The catalysed reaction is RNA(n) + a ribonucleoside 5'-triphosphate = RNA(n+1) + diphosphate. Promotes RNA polymerase assembly. Latches the N- and C-terminal regions of the beta' subunit thereby facilitating its interaction with the beta and alpha subunits. In Parafrankia sp. (strain EAN1pec), this protein is DNA-directed RNA polymerase subunit omega.